We begin with the raw amino-acid sequence, 526 residues long: Histidine-rich glycoprotein (526 aa).

Residues 1 to 8 (ATLQCSWA) form the signal peptide. Cystatin domains follow at residues 9 to 126 (LTPT…SALA) and 127 to 243 (NTKD…NISG). Disulfide bonds link Cys14–Cys505, Cys68–Cys79, Cys95–Cys116, Cys193–Cys415, Cys207–Cys230, and Cys272–Cys302. Residues 31-74 (WRRDGYLFQLLRVADAHLDGAESATVYYLVLDVKETDCSVLSRK) are interaction with ATP5F1A. N-linked (GlcNAc...) asparagine glycans are attached at residues Asn115 and Asn192. An N-linked (GlcNAc...) asparagine glycan is attached at Asn240. The segment at 243–449 (GFRPHLGKTP…GKRGPGKGHF (207 aa)) is disordered. The segment covering 260–269 (DHHHPHKPHK) has biased composition (basic residues). An N-linked (GlcNAc...) asparagine glycan is attached at Asn310. Residues 328-346 (PPPHGHHPHGPPPHGHHPH) show a composition bias toward basic residues. A compositionally biased stretch (pro residues) spans 347–401 (GPPPHGHPPHGPPPRHPPHGPPPHGHPPHGPPPHGHPPHGPPPHGHPPHGPPPHG). Positions 408-429 (GFHDHGPCDPPSHKEGPQDLHQ) are enriched in basic and acidic residues. Positions 438 to 449 (HPGKRGPGKGHF) are enriched in basic residues. Asn485 carries an N-linked (GlcNAc...) asparagine glycan.

As to quaternary structure, interacts with THBS1 (via the TSP type I repeats); the interaction blocks the antiangiogenic effect of THBS1 with CD36. Interacts with THBS2; the interaction blocks the antiangiogenic effect of THBS2 with CD36. Interacts with HPSE; the interaction is enhanced at acidic pH, partially inhibits binding of HPSE to cell surface receptors and modulates its enzymatic activity. Interacts (via the HRR domain) with TMP1; the interaction partially mediates the antiangiogenic properties of HRG. Interacts with kappa and lambda light chains of IgG molecules. Interacts with ATP5F1A; the interaction occurs on the surface of T-cells and alters their cell morphology in concert with CONA. Binds IgG molecules containing kappa and lambda light chains and inhibits the formation of insoluble immunoglobulin complexes. Interacts with F12; the interaction, which is enhanced in the presence of zinc ions and inhibited by heparin-binding to HRG, inhibits factor XII autoactivation and contact-initiated coagulation. Interacts with PLG (via its Kringle domains); the interaction tethers PLG to the cell surface and enhances its activation. Interacts (via the HRR domain) with TPM1; the interaction appears to contribute to the antiangiogenic properties of the HRR domain. Post-translationally, N-glycosylated. In terms of processing, proteolytic cleavage produces several HRG fragments which are mostly disulfide-linked and, therefore, not released. On platelet activation, may release a 33 kDa antiangiogenic peptide which encompasses the HRR.

The protein localises to the secreted. In terms of biological role, plasma glycoprotein that binds a number of ligands such as heme, heparin, heparan sulfate, thrombospondin, plasminogen, and divalent metal ions. Inhibits rosette formation. Acts as an adapter protein and implicated in regulating many processes such as immune complex and pathogen clearance, cell adhesion, angiogenesis, coagulation and fibrinolysis. Mediates clearance of necrotic cells through enhancing the phagocytosis of necrotic cells in a heparan sulfate-dependent pathway. This process can be regulated by the presence of certain HRG ligands such as heparin and zinc ions. Binds to IgG subclasses of immunoglobins containing kappa and lambda light chains with different affinities regulating their clearance and inhibiting the formation of insoluble immune complexes. Binds T-cells and alters the cell morphology Modulates angiogenesis by blocking the CD6-mediated antiangiongenic effect of thrombospondins, THBS1 and THBS2. Tethers plasminogen to the cell surface. The polypeptide is Histidine-rich glycoprotein (HRG) (Oryctolagus cuniculus (Rabbit)).